We begin with the raw amino-acid sequence, 91 residues long: Probable Fe(2+)-trafficking protein (91 aa).

It belongs to the Fe(2+)-trafficking protein family.

Its function is as follows. Could be a mediator in iron transactions between iron acquisition and iron-requiring processes, such as synthesis and/or repair of Fe-S clusters in biosynthetic enzymes. This chain is Probable Fe(2+)-trafficking protein, found in Burkholderia cenocepacia (strain ATCC BAA-245 / DSM 16553 / LMG 16656 / NCTC 13227 / J2315 / CF5610) (Burkholderia cepacia (strain J2315)).